Consider the following 182-residue polypeptide: Flavin prenyltransferase UbiX (182 aa).

FMN contacts are provided by residues 9-11 (GAS), Ser35, 86-89 (SIKT), and Arg121. The dimethylallyl phosphate site is built by Tyr151 and Arg167.

It belongs to the UbiX/PAD1 family.

It carries out the reaction dimethylallyl phosphate + FMNH2 = prenylated FMNH2 + phosphate. Functionally, flavin prenyltransferase that catalyzes the synthesis of the prenylated FMN cofactor (prenyl-FMN) for 4-hydroxy-3-polyprenylbenzoic acid decarboxylase UbiD. The prenyltransferase is metal-independent and links a dimethylallyl moiety from dimethylallyl monophosphate (DMAP) to the flavin N5 and C6 atoms of FMN. The polypeptide is Flavin prenyltransferase UbiX (Archaeoglobus fulgidus (strain ATCC 49558 / DSM 4304 / JCM 9628 / NBRC 100126 / VC-16)).